We begin with the raw amino-acid sequence, 374 residues long: 4-hydroxy-3-methylbut-2-en-1-yl diphosphate synthase (flavodoxin) (374 aa).

4 residues coordinate [4Fe-4S] cluster: Cys270, Cys273, Cys305, and Glu312.

It belongs to the IspG family. The cofactor is [4Fe-4S] cluster.

The catalysed reaction is (2E)-4-hydroxy-3-methylbut-2-enyl diphosphate + oxidized [flavodoxin] + H2O + 2 H(+) = 2-C-methyl-D-erythritol 2,4-cyclic diphosphate + reduced [flavodoxin]. It participates in isoprenoid biosynthesis; isopentenyl diphosphate biosynthesis via DXP pathway; isopentenyl diphosphate from 1-deoxy-D-xylulose 5-phosphate: step 5/6. In terms of biological role, converts 2C-methyl-D-erythritol 2,4-cyclodiphosphate (ME-2,4cPP) into 1-hydroxy-2-methyl-2-(E)-butenyl 4-diphosphate. This chain is 4-hydroxy-3-methylbut-2-en-1-yl diphosphate synthase (flavodoxin), found in Yersinia enterocolitica serotype O:8 / biotype 1B (strain NCTC 13174 / 8081).